A 276-amino-acid chain; its full sequence is DNA repair protein RecO (276 aa).

This sequence belongs to the RecO family.

Involved in DNA repair and RecF pathway recombination. The sequence is that of DNA repair protein RecO from Mycobacterium sp. (strain JLS).